A 512-amino-acid chain; its full sequence is Hyaluronidase PH-20 (512 aa).

A signal peptide spans 1-35 (MGELRFKHLFWGSFVESGGTFQTVLIFLLIPCSLT). The N-linked (GlcNAc...) asparagine glycan is linked to asparagine 46. 2 disulfides stabilise this stretch: cysteine 60–cysteine 351 and cysteine 223–cysteine 237. The active-site Proton donor is the glutamate 147. Asparagine 165 carries N-linked (GlcNAc...) asparagine glycosylation. Asparagine 293 and asparagine 368 each carry an N-linked (GlcNAc...) asparagine glycan. 3 cysteine pairs are disulfide-bonded: cysteine 376–cysteine 387, cysteine 381–cysteine 435, and cysteine 437–cysteine 464.

This sequence belongs to the glycosyl hydrolase 56 family.

The protein localises to the cell membrane. The enzyme catalyses Random hydrolysis of (1-&gt;4)-linkages between N-acetyl-beta-D-glucosamine and D-glucuronate residues in hyaluronate.. In terms of biological role, involved in sperm-egg adhesion. Upon fertilization sperm must first penetrate a layer of cumulus cells that surrounds the egg before reaching the zona pellucida. The cumulus cells are embedded in a matrix containing hyaluronic acid which is formed prior to ovulation. This protein aids in penetrating the layer of cumulus cells by digesting hyaluronic acid. This chain is Hyaluronidase PH-20 (Spam1), found in Mus musculus (Mouse).